The following is a 147-amino-acid chain: NADPH-dependent 7-cyano-7-deazaguanine reductase (147 aa).

Residues 1–23 (MQTTHLGKNSPIPQSPEEASLDY) are disordered. The active-site Thioimide intermediate is the C46. The Proton donor role is filled by D53. Substrate contacts are provided by residues 68-70 (VES) and 87-88 (HE).

It belongs to the GTP cyclohydrolase I family. QueF type 1 subfamily.

The protein resides in the cytoplasm. It carries out the reaction 7-aminomethyl-7-carbaguanine + 2 NADP(+) = 7-cyano-7-deazaguanine + 2 NADPH + 3 H(+). The protein operates within tRNA modification; tRNA-queuosine biosynthesis. Its function is as follows. Catalyzes the NADPH-dependent reduction of 7-cyano-7-deazaguanine (preQ0) to 7-aminomethyl-7-deazaguanine (preQ1). The polypeptide is NADPH-dependent 7-cyano-7-deazaguanine reductase (Zymomonas mobilis subsp. mobilis (strain ATCC 31821 / ZM4 / CP4)).